We begin with the raw amino-acid sequence, 272 residues long: Glutamate racemase (272 aa).

Substrate contacts are provided by residues 9-10 and 41-42; these read DS and YG. Catalysis depends on cysteine 73, which acts as the Proton donor/acceptor. 74–75 provides a ligand contact to substrate; it reads NT. Cysteine 183 acts as the Proton donor/acceptor in catalysis. 184-185 is a binding site for substrate; it reads TH.

Belongs to the aspartate/glutamate racemases family.

The catalysed reaction is L-glutamate = D-glutamate. Its pathway is cell wall biogenesis; peptidoglycan biosynthesis. Functionally, provides the (R)-glutamate required for cell wall biosynthesis. The protein is Glutamate racemase of Shewanella sp. (strain MR-7).